Here is a 203-residue protein sequence, read N- to C-terminus: Small ribosomal subunit protein eS1 (203 aa).

This sequence belongs to the eukaryotic ribosomal protein eS1 family.

The chain is Small ribosomal subunit protein eS1 from Methanosarcina acetivorans (strain ATCC 35395 / DSM 2834 / JCM 12185 / C2A).